A 589-amino-acid polypeptide reads, in one-letter code: Isocitrate dehydrogenase kinase/phosphatase (589 aa).

Residues 317-323 (AAGIKGM) and lysine 338 each bind ATP. Aspartate 373 is a catalytic residue.

This sequence belongs to the AceK family.

It localises to the cytoplasm. The catalysed reaction is L-seryl-[isocitrate dehydrogenase] + ATP = O-phospho-L-seryl-[isocitrate dehydrogenase] + ADP + H(+). In terms of biological role, bifunctional enzyme which can phosphorylate or dephosphorylate isocitrate dehydrogenase (IDH) on a specific serine residue. This is a regulatory mechanism which enables bacteria to bypass the Krebs cycle via the glyoxylate shunt in response to the source of carbon. When bacteria are grown on glucose, IDH is fully active and unphosphorylated, but when grown on acetate or ethanol, the activity of IDH declines drastically concomitant with its phosphorylation. The chain is Isocitrate dehydrogenase kinase/phosphatase from Colwellia psychrerythraea (strain 34H / ATCC BAA-681) (Vibrio psychroerythus).